A 446-amino-acid chain; its full sequence is MKKAYVKSYGCQMNAYDAGRMADVLAAEGYSATDTVEEADVVVLNTCHIREKAAEKVYSELGRLRVLKGDRAESGQETRIVVAGCVAQAEGREILSRAPAVDVVVGPQSYHRLPDLLRQSRETRVVDTEFPAEDKFDHLPARRNRGVTGFLTVQEGCDKFCAFCVVPYTRGAEVSRSVAAVVEEARRLVEGGVREITLIGQNVNAYHGDGPDGAPATLGQLMDALSAVPGLLRLRYTTSHPNDFADDLIAAHATNPLVMPYLHLPVQSGSDRILHAMNRRHTGDAYRRLIERIRNARPDIALSSDFIVGFPGETDADFAETLRLVSDIGFSAAFSFKYSPRAGTPAAEREDAVPEAVKTERLAALQDLLDRQRHAYNAASVGTLTEILVEKTGRHPGQVAGKTPHLQAVQFDAPASTIGTVVPVRITRAGSNSLFGEALEGAAAAA.

The MTTase N-terminal domain occupies 2–122 (KKAYVKSYGC…LPDLLRQSRE (121 aa)). [4Fe-4S] cluster contacts are provided by C11, C47, C85, C157, C161, and C164. In terms of domain architecture, Radical SAM core spans 143-375 (RNRGVTGFLT…QDLLDRQRHA (233 aa)). In terms of domain architecture, TRAM spans 378 to 440 (AASVGTLTEI…SNSLFGEALE (63 aa)).

The protein belongs to the methylthiotransferase family. MiaB subfamily. As to quaternary structure, monomer. Requires [4Fe-4S] cluster as cofactor.

Its subcellular location is the cytoplasm. The catalysed reaction is N(6)-dimethylallyladenosine(37) in tRNA + (sulfur carrier)-SH + AH2 + 2 S-adenosyl-L-methionine = 2-methylsulfanyl-N(6)-dimethylallyladenosine(37) in tRNA + (sulfur carrier)-H + 5'-deoxyadenosine + L-methionine + A + S-adenosyl-L-homocysteine + 2 H(+). Its function is as follows. Catalyzes the methylthiolation of N6-(dimethylallyl)adenosine (i(6)A), leading to the formation of 2-methylthio-N6-(dimethylallyl)adenosine (ms(2)i(6)A) at position 37 in tRNAs that read codons beginning with uridine. The protein is tRNA-2-methylthio-N(6)-dimethylallyladenosine synthase of Methylorubrum extorquens (strain CM4 / NCIMB 13688) (Methylobacterium extorquens).